Consider the following 528-residue polypeptide: MYSFIECIAGALFVLGCVVVTLVVIGVRALLYNFRNRPAPPLSSQLGQNAPHVTIIRPVKGLEPRLYDCIAASFRQDYPQDKVSIRLCLEDDTDPAYPVLQKVIEDFPTIDARIMLEKEDHVLSETVNMGPNPKIRNLSRAYREAKGDIVWIIDCNIWMAKGVLGRMVDKLMGYRVGGAAKPYKFVHQLPIVVDLMDFSTSLAAEGRSLLDASPEEDHPTEDLGAEEFPKVMSHGGGRIDEMFMTTSHAKFYSAINTLRAAPCAVGKSNMFRKSQLDQATDAILNPKLDQSKNLPTGVDYFSHNICEDHLIGEALWTTDFPGYKSHGLVWGDIAVQPVSGMSVQAYTARRSRWLRARKYTVLSATILEPFTECFLFATYMSLAMTTIPVLSQNLGIPKTWNATAIAWFTITTLWMLIDYIGYLRLHSGVTMEVDEHTPYFAKGFKNTGGIKRRPFLEFLAAWIGREGLAFPVWAYAVVFGNTVNWRGRLFYIHWDTTVDAVEPREERTREVRTPELERGPSRNKHRVD.

Residues 1–6 are Lumenal-facing; the sequence is MYSFIE. A helical transmembrane segment spans residues 7 to 27; it reads CIAGALFVLGCVVVTLVVIGV. Over 28–369 the chain is Cytoplasmic; the sequence is RALLYNFRNR…TVLSATILEP (342 aa). Position 94 (Asp-94) is a short sequence motif, D1. Position 154 (Asp-154) is a short sequence motif, D2. Residue Asp-308 is a short sequence motif, D3. Asp-308 serves as the catalytic Proton acceptor. Residues 349–353 carry the (Q/R)XXRW motif; sequence RRSRW. Residues 370 to 390 traverse the membrane as a helical segment; that stretch reads FTECFLFATYMSLAMTTIPVL. At 391 to 402 the chain is on the lumenal side; that stretch reads SQNLGIPKTWNA. Residues 403 to 423 form a helical membrane-spanning segment; it reads TAIAWFTITTLWMLIDYIGYL. The Cytoplasmic portion of the chain corresponds to 424–457; sequence RLHSGVTMEVDEHTPYFAKGFKNTGGIKRRPFLE. Residues 458–478 form a helical membrane-spanning segment; that stretch reads FLAAWIGREGLAFPVWAYAVV. The Lumenal segment spans residues 479–528; the sequence is FGNTVNWRGRLFYIHWDTTVDAVEPREERTREVRTPELERGPSRNKHRVD. The interval 503-528 is disordered; the sequence is PREERTREVRTPELERGPSRNKHRVD.

This sequence belongs to the glycosyltransferase 2 family.

The protein resides in the golgi apparatus membrane. It catalyses the reaction an N-acylsphing-4-enine + UDP-alpha-D-glucose = a beta-D-glucosyl-(1&lt;-&gt;1')-N-acylsphing-4-enine + UDP + H(+). It functions in the pathway lipid metabolism; sphingolipid metabolism. In terms of biological role, catalyzes the final step in the biosynthesis of the membrane lipid glucosylceramide (GluCer), the transfer of glucose to ceramide. Glucosylceramides play important roles in growth, differentiation and pathogenicity. Contribution to fungal pathogenesis is host-dependent. The sequence is that of Ceramide glucosyltransferase from Gibberella zeae (strain ATCC MYA-4620 / CBS 123657 / FGSC 9075 / NRRL 31084 / PH-1) (Wheat head blight fungus).